A 331-amino-acid polypeptide reads, in one-letter code: Probable endo-beta-1,4-glucanase B (331 aa).

The first 18 residues, 1–18 (MKFQSTLLLAAAAGSALA), serve as a signal peptide directing secretion. 2 N-linked (GlcNAc...) asparagine glycosylation sites follow: Asn-38 and Asn-100. Glu-160 functions as the Proton donor in the catalytic mechanism. Residue Asn-211 is glycosylated (N-linked (GlcNAc...) asparagine). Catalysis depends on Glu-266, which acts as the Nucleophile. Asn-288 carries N-linked (GlcNAc...) asparagine glycosylation.

This sequence belongs to the glycosyl hydrolase 5 (cellulase A) family.

It is found in the secreted. The catalysed reaction is Endohydrolysis of (1-&gt;4)-beta-D-glucosidic linkages in cellulose, lichenin and cereal beta-D-glucans.. In terms of biological role, has endoglucanase activity on substrates containing beta-1,4 glycosidic bonds, like in carboxymethylcellulose (CMC), hydroxyethylcellulose (HEC) and beta-glucan. Involved in the degradation of complex natural cellulosic substrates. The chain is Probable endo-beta-1,4-glucanase B (eglB) from Aspergillus niger (strain ATCC MYA-4892 / CBS 513.88 / FGSC A1513).